A 186-amino-acid chain; its full sequence is Biofilm operon icaADBC HTH-type negative transcriptional regulator IcaR (186 aa).

The region spanning 1-59 (MKDKIIDNAITLFSEKGYDGTTLDDIAKSVNIKKASLYYHFDSKKSIYEQSVKCCFDYL) is the HTH tetR-type domain. A DNA-binding region (H-T-H motif) is located at residues 22 to 41 (TLDDIAKSVNIKKASLYYHF).

As to quaternary structure, homodimer.

Functionally, represses transcription of the icaADBC operon necessary for biofilm production. The sequence is that of Biofilm operon icaADBC HTH-type negative transcriptional regulator IcaR (icaR) from Staphylococcus aureus (strain NCTC 8325 / PS 47).